The sequence spans 286 residues: ATP synthase gamma chain (286 aa).

It belongs to the ATPase gamma chain family. F-type ATPases have 2 components, CF(1) - the catalytic core - and CF(0) - the membrane proton channel. CF(1) has five subunits: alpha(3), beta(3), gamma(1), delta(1), epsilon(1). CF(0) has three main subunits: a, b and c.

The protein resides in the cell inner membrane. Its function is as follows. Produces ATP from ADP in the presence of a proton gradient across the membrane. The gamma chain is believed to be important in regulating ATPase activity and the flow of protons through the CF(0) complex. The protein is ATP synthase gamma chain of Pseudomonas fluorescens (strain Pf0-1).